The chain runs to 621 residues: Proton pump-interactor BIP131 (621 aa).

Residues 250–305 (IDEVKRDRQAVRDKIKVLEDQIHAVDGEIAALQDDLTAATARKDKAFEALNELRKT) adopt a coiled-coil conformation. The segment covering 374–387 (SRDGRMRNPDEKPI) has biased composition (basic and acidic residues). Residues 374–572 (SRDGRMRNPD…RSTVTKTKTP (199 aa)) are disordered. The segment covering 430–441 (KAPAKAAKAKQP) has biased composition (low complexity). Residues 448–516 (PDVHDDEPPK…AEKKLKEKEK (69 aa)) are compositionally biased toward basic and acidic residues. Residues 466 to 524 (EAKLKEMKRQEEIEKNKLALERKKKQAEKQAMKAAARAEKEAEKKLKEKEKKARKRSAT) are a coiled coil. The chain crosses the membrane as a helical span at residues 589–609 (WGAPMAALAAALVALLGALVY).

The protein belongs to the plant proton pump-interactor protein family. As to quaternary structure, interacts with BRI1.

It is found in the cell membrane. Functionally, may regulate plasma membrane ATPase activity. The sequence is that of Proton pump-interactor BIP131 from Oryza sativa subsp. japonica (Rice).